A 479-amino-acid polypeptide reads, in one-letter code: Envelope glycoprotein C homolog (479 aa).

An N-terminal signal peptide occupies residues 1–22; that stretch reads MASLARAMLALLALYAAAIAAA. Residues 23–451 are Virion surface-facing; the sequence is PSTTTALDTT…SVSWPVVSSM (429 aa). Residues 26 to 96 are disordered; it reads TTALDTTPNG…RVHGDKATAH (71 aa). Asn-40 is a glycosylation site (N-linked (GlcNAc...) asparagine; by host). Over residues 48–57 the composition is skewed to pro residues; it reads PSPPPTPAPA. The HDB1 stretch occupies residues 75-82; sequence SRRKPPRN. A compositionally biased stretch (basic residues) spans 75–87; sequence SRRKPPRNNNRTR. N-linked (GlcNAc...) asparagine; by host glycosylation is present at Asn-84. The segment at 95–101 is HDB2; that stretch reads AHGRKRI. A disulfide bond links Cys-103 and Cys-120. The interval 135-140 is HDB3; the sequence is YRRGRF. N-linked (GlcNAc...) asparagine; by host glycosylation is found at Asn-169, Asn-192, Asn-220, Asn-228, Asn-285, and Asn-302. 3 cysteine pairs are disulfide-bonded: Cys-256–Cys-326, Cys-365–Cys-418, and Cys-369–Cys-392. A helical membrane pass occupies residues 452–472; the sequence is IVVIAGIGILAIVLVIMATCV. The Cytoplasmic segment spans residues 473–479; sequence YYRQAGP.

Belongs to the herpesviridae glycoprotein C family. As to quaternary structure, interacts with host complement component C3; this interaction inhibits host immune response by disregulating complement cascade.

It is found in the virion membrane. Essential for the initial attachment to heparan sulfate moieties of the host cell surface proteoglycans. Plays also a role in host immune evasion by inhibiting the host complement cascade activation. This is Envelope glycoprotein C homolog (gC) from Suid herpesvirus 1 (strain Indiana-Funkhauser / Becker) (SuHV-1).